We begin with the raw amino-acid sequence, 101 residues long: Growth-regulated alpha protein (101 aa).

Residues 1-28 (MAPATRSLLRAPLLLLLLLLATSRLATG) form the signal peptide. Disulfide bonds link cysteine 37–cysteine 63 and cysteine 39–cysteine 79.

The protein belongs to the intercrine alpha (chemokine CxC) family.

It localises to the secreted. In terms of biological role, has chemotactic activity for neutrophils. The polypeptide is Growth-regulated alpha protein (CXCL1) (Cricetulus griseus (Chinese hamster)).